A 209-amino-acid chain; its full sequence is Small ribosomal subunit protein uS3 (209 aa).

Residues 38–107 (IRKVIKSKYA…RFIVNVEEIK (70 aa)) enclose the KH type-2 domain.

It belongs to the universal ribosomal protein uS3 family. In terms of assembly, part of the 30S ribosomal subunit. Forms a tight complex with proteins S10 and S14.

Its function is as follows. Binds the lower part of the 30S subunit head. Binds mRNA in the 70S ribosome, positioning it for translation. The polypeptide is Small ribosomal subunit protein uS3 (Thermosipho melanesiensis (strain DSM 12029 / CIP 104789 / BI429)).